A 348-amino-acid chain; its full sequence is Phospho-N-acetylmuramoyl-pentapeptide-transferase (348 aa).

Helical transmembrane passes span 11-31, 67-87, 92-112, 128-148, 163-183, 198-218, 222-242, 251-271, 276-296, and 326-346; these read SLILFLVTVMGFAFLVGIFLG, TAGGVLFFLVLLMSIFFLLPL, TWLFVFSIVSWGSLGWYDDIV, FIVQLLLSAVTVITVFFIDKE, IFLGSSILAKLFCFSLAMLAI, GLATGITCMSSFGLLIVAIMS, PLAYDVSIVLATLVGISLAFL, VFMGDTGSLLIGGILASCAVM, LFLIFLGGVFVAEAGSVILQV, and VVARFWMAGLLCTVLGIVAAL.

It belongs to the glycosyltransferase 4 family. MraY subfamily. It depends on Mg(2+) as a cofactor.

The protein resides in the cell inner membrane. It carries out the reaction UDP-N-acetyl-alpha-D-muramoyl-L-alanyl-gamma-D-glutamyl-meso-2,6-diaminopimeloyl-D-alanyl-D-alanine + di-trans,octa-cis-undecaprenyl phosphate = di-trans,octa-cis-undecaprenyl diphospho-N-acetyl-alpha-D-muramoyl-L-alanyl-D-glutamyl-meso-2,6-diaminopimeloyl-D-alanyl-D-alanine + UMP. The protein operates within cell wall biogenesis; peptidoglycan biosynthesis. In terms of biological role, catalyzes the initial step of the lipid cycle reactions in the biosynthesis of the cell wall peptidoglycan: transfers peptidoglycan precursor phospho-MurNAc-pentapeptide from UDP-MurNAc-pentapeptide onto the lipid carrier undecaprenyl phosphate, yielding undecaprenyl-pyrophosphoryl-MurNAc-pentapeptide, known as lipid I. The polypeptide is Phospho-N-acetylmuramoyl-pentapeptide-transferase (Chlamydia felis (strain Fe/C-56) (Chlamydophila felis)).